Consider the following 1024-residue polypeptide: Beta-galactosidase (1024 aa).

The substrate site is built by Asn103 and Asp202. Asp202 contacts Na(+). Mg(2+)-binding residues include Glu417, His419, and Glu462. Substrate is bound by residues Glu462 and Glu538–His541. Residue Glu462 is the Proton donor of the active site. Catalysis depends on Glu538, which acts as the Nucleophile. Asn598 lines the Mg(2+) pocket. Na(+) is bound by residues Phe602 and Asn605. Positions 605 and 1000 each coordinate substrate.

The protein belongs to the glycosyl hydrolase 2 family. Homotetramer. Mg(2+) is required as a cofactor. The cofactor is Na(+).

It catalyses the reaction Hydrolysis of terminal non-reducing beta-D-galactose residues in beta-D-galactosides.. This is Beta-galactosidase from Escherichia coli O6:K15:H31 (strain 536 / UPEC).